The sequence spans 194 residues: Flavin prenyltransferase UbiX (194 aa).

FMN-binding positions include 9 to 11, Ser-35, 86 to 89, and Arg-121; these read GAS and SIKT. Tyr-151 and Lys-167 together coordinate dimethylallyl phosphate.

The protein belongs to the UbiX/PAD1 family.

It carries out the reaction dimethylallyl phosphate + FMNH2 = prenylated FMNH2 + phosphate. Its function is as follows. Involved in the carboxylation of phenylphosphate. In terms of biological role, flavin prenyltransferase that catalyzes the synthesis of the prenylated FMN cofactor (prenyl-FMN) for 4-hydroxy-3-polyprenylbenzoic acid decarboxylase UbiD. The prenyltransferase is metal-independent and links a dimethylallyl moiety from dimethylallyl monophosphate (DMAP) to the flavin N5 and C6 atoms of FMN. The protein is Flavin prenyltransferase UbiX of Thauera aromatica.